Here is a 634-residue protein sequence, read N- to C-terminus: Phototropic-responsive NPH3 family protein NPY2 (634 aa).

Residues 29-97 (SDISVDVEGS…CYGMTVTLSA (69 aa)) enclose the BTB domain. The NPH3 domain maps to 207 to 488 (DWWVEDLCEL…VQVLFFEQVR (282 aa)). Residue Tyr429 is modified to Phosphotyrosine. 2 disordered regions span residues 492–517 (SSGSSTPDLPRGMGRELRSCGTYGSS) and 584–634 (QLQS…VSVS). Over residues 588–602 (KGGGEKNNGGGGGGS) the composition is skewed to gly residues. The span at 619-634 (KTATPSRNLTRRVSVS) shows a compositional bias: polar residues.

This sequence belongs to the NPH3 family. In terms of tissue distribution, specifically expressed in the hypophysis and the root meristems in the embryos. Highly expressed in primary root tips and radicles.

It localises to the cell membrane. The protein resides in the cytoplasm. Its subcellular location is the cytosol. Its pathway is protein modification; protein ubiquitination. In terms of biological role, may act as a substrate-specific adapter of an E3 ubiquitin-protein ligase complex (CUL3-RBX1-BTB) which mediates the ubiquitination and subsequent proteasomal degradation of target proteins. Plays an essential role in auxin-mediated organogenesis and in root gravitropic responses through the control of PIN proteins (e.g. PIN1 and PIN2) polarity in the root tip endodermal cell layer and in shoot epidermis. Recruited to the plasma membrane by PINs (e.g. PIN1 and PIN2) and, in concert with AGC kinases-mediated (e.g. D6PK and PID) PINs phosphorylation, maintains their polarity through limiting lateral diffusion-based escape. The sequence is that of Phototropic-responsive NPH3 family protein NPY2 from Arabidopsis thaliana (Mouse-ear cress).